The sequence spans 523 residues: Putative UDP-glucuronosyltransferase ugt-50 (523 aa).

A signal peptide spans methionine 1–alanine 25. Residues asparagine 84, asparagine 248, asparagine 283, and asparagine 487 are each glycosylated (N-linked (GlcNAc...) asparagine). The helical transmembrane segment at isoleucine 490–leucine 508 threads the bilayer.

Belongs to the UDP-glycosyltransferase family.

It is found in the membrane. The enzyme catalyses glucuronate acceptor + UDP-alpha-D-glucuronate = acceptor beta-D-glucuronoside + UDP + H(+). In Caenorhabditis elegans, this protein is Putative UDP-glucuronosyltransferase ugt-50 (ugt-50).